Here is a 306-residue protein sequence, read N- to C-terminus: UDP-3-O-acyl-N-acetylglucosamine deacetylase (306 aa).

3 residues coordinate Zn(2+): His79, His238, and Asp242. Residue His265 is the Proton donor of the active site.

This sequence belongs to the LpxC family. Zn(2+) serves as cofactor.

It catalyses the reaction a UDP-3-O-[(3R)-3-hydroxyacyl]-N-acetyl-alpha-D-glucosamine + H2O = a UDP-3-O-[(3R)-3-hydroxyacyl]-alpha-D-glucosamine + acetate. Its pathway is glycolipid biosynthesis; lipid IV(A) biosynthesis; lipid IV(A) from (3R)-3-hydroxytetradecanoyl-[acyl-carrier-protein] and UDP-N-acetyl-alpha-D-glucosamine: step 2/6. Catalyzes the hydrolysis of UDP-3-O-myristoyl-N-acetylglucosamine to form UDP-3-O-myristoylglucosamine and acetate, the committed step in lipid A biosynthesis. This is UDP-3-O-acyl-N-acetylglucosamine deacetylase from Shewanella violacea (strain JCM 10179 / CIP 106290 / LMG 19151 / DSS12).